Reading from the N-terminus, the 238-residue chain is Probable xyloglucan-specific endo-beta-1,4-glucanase A (238 aa).

Residues 1–18 (MKLSLSVALSLAASTAQA) form the signal peptide. N-linked (GlcNAc...) asparagine glycans are attached at residues asparagine 106 and asparagine 171.

This sequence belongs to the glycosyl hydrolase 12 (cellulase H) family.

It localises to the secreted. The catalysed reaction is xyloglucan + H2O = xyloglucan oligosaccharides.. In terms of biological role, catalyzes endohydrolysis of 1,4-beta-D-glucosidic linkages in xyloglucan with retention of the beta-configuration of the glycosyl residues. Specific for xyloglucan and does not hydrolyze other cell wall components. The chain is Probable xyloglucan-specific endo-beta-1,4-glucanase A (xgeA) from Aspergillus fumigatus (strain ATCC MYA-4609 / CBS 101355 / FGSC A1100 / Af293) (Neosartorya fumigata).